The primary structure comprises 200 residues: MQGIAKIKEKIFEEATEQKNRIIEKAKKEAAEILEKARKQAVQLEAEAEKKAKKVAREEKRKILSIAELEERKRYLEAKQALINEAFVRAENKLLNLEPEKYRDLVYRMILAAAVDGNEEIIVSEADKEKITPELLERVNEALKKQGKAGNIRFSGEKRAIKGGFILKSATVEINCTFDYLLKVQREELETEVARILFEE.

It belongs to the V-ATPase E subunit family.

In terms of biological role, produces ATP from ADP in the presence of a proton gradient across the membrane. The protein is V-type proton ATPase subunit E of Thermoanaerobacter pseudethanolicus (strain ATCC 33223 / 39E) (Clostridium thermohydrosulfuricum).